Reading from the N-terminus, the 337-residue chain is Glyceraldehyde-3-phosphate dehydrogenase (337 aa).

NAD(+) contacts are provided by residues Thr-11–Ile-12 and Gly-111. Residue Ser-140–Asn-142 coordinates D-glyceraldehyde 3-phosphate. The Nucleophile role is filled by Cys-141. Residue Arg-169 participates in NAD(+) binding. Residues Lys-177 to Pro-196 are disordered. His-194–Gly-195 is a D-glyceraldehyde 3-phosphate binding site. NAD(+) is bound at residue Gln-301.

It belongs to the glyceraldehyde-3-phosphate dehydrogenase family. Homotetramer.

It localises to the cytoplasm. The enzyme catalyses D-glyceraldehyde 3-phosphate + phosphate + NADP(+) = (2R)-3-phospho-glyceroyl phosphate + NADPH + H(+). It carries out the reaction D-glyceraldehyde 3-phosphate + phosphate + NAD(+) = (2R)-3-phospho-glyceroyl phosphate + NADH + H(+). Its pathway is carbohydrate degradation; glycolysis; pyruvate from D-glyceraldehyde 3-phosphate: step 1/5. This Methanosphaera stadtmanae (strain ATCC 43021 / DSM 3091 / JCM 11832 / MCB-3) protein is Glyceraldehyde-3-phosphate dehydrogenase.